The following is a 275-amino-acid chain: Large ribosomal subunit protein uL2c (275 aa).

The interval 223 to 255 (VVMNPVDHPHGGGEGRAPIGRSRPVTPWGRPAL) is disordered.

It belongs to the universal ribosomal protein uL2 family. In terms of assembly, part of the 50S ribosomal subunit.

Its subcellular location is the plastid. The protein resides in the chloroplast. The polypeptide is Large ribosomal subunit protein uL2c (rpl2) (Pleurastrum terricola (Filamentous green alga)).